Here is a 428-residue protein sequence, read N- to C-terminus: UPF0761 membrane protein TERTU_3006 (428 aa).

The next 7 helical transmembrane spans lie at 47-67 (LFALVPLMTVTYTMFSAIPAF), 104-124 (LSGVGVVMLLVTAYLMLRNIE), 143-163 (YLLYWAILSVGPILVAAAFLL), 189-209 (VVPWALTSAAFTLLFVAVPNC), 218-238 (IGGVITAFAFEVVKAVFGYIV), 248-268 (GAFAVVPLFLLWVNLLWTIIL), and 292-312 (MIVVLICLALFREKAALGESV).

This sequence belongs to the UPF0761 family.

The protein localises to the cell inner membrane. The chain is UPF0761 membrane protein TERTU_3006 from Teredinibacter turnerae (strain ATCC 39867 / T7901).